We begin with the raw amino-acid sequence, 236 residues long: Hydantoin racemase (236 aa).

As to quaternary structure, homohexamer, homoheptamer or homooctamer.

The catalysed reaction is a D-5-monosubstituted hydantoin = a L-5-monosubstituted hydantoin. It catalyses the reaction D-5-benzylhydantoin = L-5-benzylhydantoin. With respect to regulation, completely inhibited by HgCl(2) and iodoacetamide. Stimulated by dithiothreitol. Involved in the asymmetric conversion of racemic 5-substituted hydantoins to the corresponding L-amino acids. Catalyzes the racemization via enolization of D- and L-5-monosubstituted hydantoins. It shows preference for hydantoins with arylalkyl side chains such as 5-benzylhydantoin (BH) and, to a lesser extent, 5-(3-indolylmethylene)hydantoin (IMH). This is Hydantoin racemase from Paenarthrobacter aurescens (Arthrobacter aurescens).